Consider the following 319-residue polypeptide: HTH-type transcriptional regulator YidZ (319 aa).

An HTH lysR-type domain is found at 8–65 (LDLNLLLCLQLLMQERSVTKAAKRMNVTPSAVSKSLAKLRAWFDDPLFVNSPLGLSPT). Positions 25-44 (VTKAAKRMNVTPSAVSKSLA) form a DNA-binding region, H-T-H motif.

The protein belongs to the LysR transcriptional regulatory family.

Functionally, involved in anaerobic NO protection. This chain is HTH-type transcriptional regulator YidZ, found in Escherichia coli O6:H1 (strain CFT073 / ATCC 700928 / UPEC).